The sequence spans 684 residues: Glycine--tRNA ligase beta subunit (684 aa).

Belongs to the class-II aminoacyl-tRNA synthetase family. Tetramer of two alpha and two beta subunits.

Its subcellular location is the cytoplasm. The catalysed reaction is tRNA(Gly) + glycine + ATP = glycyl-tRNA(Gly) + AMP + diphosphate. The protein is Glycine--tRNA ligase beta subunit of Pseudomonas entomophila (strain L48).